A 295-amino-acid chain; its full sequence is Adrenocorticotropic hormone receptor (295 aa).

At 1–23 (MRHILNLYENINSTARNNSDCPA) the chain is on the extracellular side. Residues Asn12 and Asn17 are each glycosylated (N-linked (GlcNAc...) asparagine). 2 cysteine pairs are disulfide-bonded: Cys21–Cys253 and Cys245–Cys251. Residues 24–49 (VILPEEIFFTVSIVGVLENLMVLLAV) form a helical membrane-spanning segment. Residues 50 to 58 (AKNKSLQSP) are Cytoplasmic-facing. A helical membrane pass occupies residues 59–79 (MYFFICSLAISDMLGSLYKIL). At 80–104 (ENVLIMFRNMGYLEPRGSFESTADD) the chain is on the extracellular side. A helical membrane pass occupies residues 105-126 (VVDSLFILSLLGSICSLSVIAA). Topologically, residues 127 to 147 (DRYITIFHALQYHSIVTMHRA) are cytoplasmic. A helical membrane pass occupies residues 148 to 168 (LVVLTVLWAGCTGSGITIVTF). At 169-180 (SHHVPTVIAFTA) the chain is on the extracellular side. Residues 181–199 (LFPLMLAFILCLYVHMFLL) form a helical membrane-spanning segment. Topologically, residues 200–217 (ARSHARRTSSLPKANMRG) are cytoplasmic. The helical transmembrane segment at 218 to 244 (AITLTVLLGVFIFCWAPFVLHVLLMTF) threads the bilayer. At 245-256 (CPADPYCACYMS) the chain is on the extracellular side. The chain crosses the membrane as a helical span at residues 257-278 (LFQVNGVLIMCNAVIDPFIYAF). The Cytoplasmic segment spans residues 279-295 (RSPELRVAFKKMVICNW). A lipid anchor (S-palmitoyl cysteine) is attached at Cys293.

This sequence belongs to the G-protein coupled receptor 1 family. As to quaternary structure, homodimer. Interacts with corticotropin (ACTH). Interacts with MRAP; this interaction targets MC2R to the plasma membrane. Interacts with MRAP2; competing with MRAP for binding to MC2R and impairing the binding of corticotropin (ACTH). In terms of processing, ubiquitinated by MGRN1 that may be involved in post-endocytic trafficking and/or degradation of internalized receptor.

Its subcellular location is the cell membrane. Hormone receptor primarily expressed in adrenal cortex that plays a key role in regulating adrenocortical function. Upon corticotropin (ACTH) binding, facilitates the release of adrenal glucocorticoids, including cortisol and corticosterone. In addition, MC2R is required for fetal and neonatal adrenal gland development. Mechanistically, activates adenylate cyclase (cAMP), the MAPK cascade as well as the cAMP-dependent protein kinase A pathway leading to steroidogenic factor 1/NR5A1-mediated transcriptional activation. The chain is Adrenocorticotropic hormone receptor (MC2R) from Ovis aries (Sheep).